The following is a 459-amino-acid chain: Glycosyl hydrolase family 109 protein (459 aa).

The segment at residues 1 to 31 (MHNIHRRNFLKAAGAATAGLVTANIALNAYA) is a signal peptide (tat-type signal). Residues 64–65 (ER), aspartate 86, 135–138 (WEWH), 155–156 (EV), and asparagine 184 each bind NAD(+). Substrate contacts are provided by residues tyrosine 213, arginine 232, 244–247 (YPTH), and tyrosine 326. An NAD(+)-binding site is contributed by tyrosine 244.

It belongs to the Gfo/Idh/MocA family. Glycosyl hydrolase 109 subfamily. Requires NAD(+) as cofactor. In terms of processing, predicted to be exported by the Tat system. The position of the signal peptide cleavage has not been experimentally proven.

Its function is as follows. Glycosidase. This Shewanella baltica (strain OS155 / ATCC BAA-1091) protein is Glycosyl hydrolase family 109 protein.